The chain runs to 340 residues: Insulin gene enhancer protein ISL-2B (340 aa).

2 LIM zinc-binding domains span residues 9–62 (CVGC…CKRD) and 71–125 (CAKC…RADH). A DNA-binding region (homeobox) is located at residues 172–231 (TTRVRTVLNEKQLHTLRTCYNANPRPDALMKEQLVEMTGLSPRVIRVWFQNKRCKDKKRT). Over residues 307 to 317 (ESGSMGNSSGS) the composition is skewed to low complexity. Residues 307-340 (ESGSMGNSSGSDVTSLSSQLPDTPNSMVPSPMDT) form a disordered region. A compositionally biased stretch (polar residues) spans 318–340 (DVTSLSSQLPDTPNSMVPSPMDT).

It is found in the nucleus. In terms of biological role, binds to one of the cis-acting domain of the insulin gene enhancer. May be involved in subtype specialization of primary motoneurons. This chain is Insulin gene enhancer protein ISL-2B (isl2b), found in Oncorhynchus tshawytscha (Chinook salmon).